Reading from the N-terminus, the 365-residue chain is Protein BZR1 homolog 2 (365 aa).

Residues 1–30 show a composition bias toward gly residues; that stretch reads MATGGGGGGGGMGGGGVGGGAGAAGVGVGG. Disordered regions lie at residues 1–45, 113–154, 191–236, and 344–365; these read MATG…KRRE, SPSP…NMAN, SAPV…TPPS, and HEDS…RAAA. Residues 31 to 113 form a required for DNA-binding region; sequence RMPTWREREN…RMEVIGCSVS (83 aa). A compositionally biased stretch (low complexity) spans 113–144; it reads SPSPCSSYQPSPRASYNASPTSSSFPSGASSP. 2 stretches are compositionally biased toward polar residues: residues 215–233 and 356–365; these read SNVQ…VNST and LGSSRTRAAA.

It belongs to the BZR/LAT61 family. In terms of assembly, interacts with PUB24.

Functionally, may function in brassinosteroid signaling. The sequence is that of Protein BZR1 homolog 2 from Oryza sativa subsp. japonica (Rice).